Consider the following 367-residue polypeptide: Ataxin-7-like protein 3 (367 aa).

The SGF11-type zinc-finger motif lies at 84–105; sequence CVCPNCSRSIAASRFAPHLEKC. Over residues 116–125 the composition is skewed to low complexity; it reads ANRRIASSNN. The disordered stretch occupies residues 116–184; sequence ANRRIASSNN…GELSGSVNPD (69 aa). Positions 132 to 141 are enriched in acidic residues; that stretch reads DQEDNDDIND. The SCA7 domain occupies 199-266; it reads LGPEELRSIL…TMLENEAYEP (68 aa). Residues 280 to 299 show a composition bias toward low complexity; it reads ASSDISPSDSASSKASTNNS. Residues 280–367 form a disordered region; that stretch reads ASSDISPSDS…PAPSIYDDLN (88 aa). Residues 318–329 are compositionally biased toward basic and acidic residues; the sequence is GERDKAQERDRI. The span at 330-346 shows a compositional bias: low complexity; sequence AGSGSSGSSSQNALGLS.

This sequence belongs to the SGF11 family. In terms of assembly, component of some SAGA transcription coactivator-HAT complexes. Within the SAGA complex, participates in a subcomplex of SAGA called the DUB module (deubiquitination module).

It is found in the nucleus. Component of the transcription regulatory histone acetylation (HAT) complex SAGA, a multiprotein complex that activates transcription by remodeling chromatin and mediating histone acetylation and deubiquitination. Within the SAGA complex, participates in a subcomplex that specifically deubiquitinates histone H2B. The SAGA complex is recruited to specific gene promoters by activators, where it is required for transcription. This is Ataxin-7-like protein 3 (atxn7l3) from Danio rerio (Zebrafish).